A 546-amino-acid chain; its full sequence is Chaperonin GroEL 4 (546 aa).

Residues 30–33 (TLGP), K51, 87–91 (DGTTT), G415, and D495 each bind ATP. The interval 524-546 (APKDTPAAGQPGGPGAGGPGLDF) is disordered. A compositionally biased stretch (gly residues) spans 533–546 (QPGGPGAGGPGLDF).

It belongs to the chaperonin (HSP60) family. As to quaternary structure, forms a cylinder of 14 subunits composed of two heptameric rings stacked back-to-back. Interacts with the co-chaperonin GroES.

The protein localises to the cytoplasm. The catalysed reaction is ATP + H2O + a folded polypeptide = ADP + phosphate + an unfolded polypeptide.. In terms of biological role, together with its co-chaperonin GroES, plays an essential role in assisting protein folding. The GroEL-GroES system forms a nano-cage that allows encapsulation of the non-native substrate proteins and provides a physical environment optimized to promote and accelerate protein folding. This Paraburkholderia xenovorans (strain LB400) protein is Chaperonin GroEL 4.